The primary structure comprises 481 residues: Solute carrier family 46 member 2 (481 aa).

The Cytoplasmic portion of the chain corresponds to 1 to 37 (MGPEAAGPGRGAAPRLQVRTWIEPVVAATQVASSLYE). Residues 38-58 (AGLLLVVKASFGAGAGAGAGA) form a helical membrane-spanning segment. Topologically, residues 59 to 83 (ASNHSAGPPRGAPEDQQQRAISNFY) are extracellular. N-linked (GlcNAc...) asparagine glycosylation occurs at Asn61. A helical transmembrane segment spans residues 84-104 (IVYNLVVGLTPLLSAYALGWL). Residues 105–113 (SDRRHRKVA) lie on the Cytoplasmic side of the membrane. A helical membrane pass occupies residues 114–134 (ICVALLGFLLSRVGLLLKVLL). The Extracellular portion of the chain corresponds to 135-143 (DWPVEVLYG). Residues 144–164 (AAALNGLCGGFSAFWAGVMAL) traverse the membrane as a helical segment. The Cytoplasmic portion of the chain corresponds to 165–179 (GSLGSSEGRRSVRLV). The helical transmembrane segment at 180–200 (LIDLILGLAGFCGSMASGHLF) threads the bilayer. Over 201–210 (KQVAGHSGQG) the chain is Extracellular. The helical transmembrane segment at 211 to 231 (LVLTACSVSCATFALLYSLLV) threads the bilayer. Topologically, residues 232 to 286 (LKVPEAAAGSGQALSAGDSVAGTVGTYRTLDPDHSDKQSVQGLHPPSPGKAKPRR) are cytoplasmic. The tract at residues 263–282 (PDHSDKQSVQGLHPPSPGKA) is disordered. Residues 287–307 (TIIALLFLGAIVYDLAVVGTV) traverse the membrane as a helical segment. At 308–326 (DVMPLFVLREPLSWNQVQV) the chain is on the extracellular side. A helical transmembrane segment spans residues 327 to 347 (GYGMAAGYTIFITSFLGVLVF). Over 348–353 (SRCFQD) the chain is Cytoplasmic. Residues 354-374 (TTMIMIGMVSFGSGALLLAFV) form a helical membrane-spanning segment. The Extracellular segment spans residues 375-376 (KE). Residues 377 to 397 (TYMFYIARAVMLFALIPITTI) form a helical membrane-spanning segment. Over 398-412 (RSAMSKLIKGSSYGK) the chain is Cytoplasmic. Residues 413–433 (VFVILQLSLTLTGVVTSTVYN) form a helical membrane-spanning segment. Over 434–446 (KIYQVTMEKFIGT) the chain is Extracellular. A helical transmembrane segment spans residues 447–467 (CFALSSFLSFLAIIPIGIVAY). The Cytoplasmic portion of the chain corresponds to 468–481 (KQASWLQYGDVRET).

This sequence belongs to the major facilitator superfamily. SLC46A family. In terms of processing, glycosylated. In terms of tissue distribution, highly expressed by the epididymal duct epithelium.

The protein localises to the endosome membrane. Its subcellular location is the cell membrane. It carries out the reaction N-acetyl-beta-D-glucosaminyl-(1-&gt;4)-1,6-anhydro-N-acetyl-beta-D-muramoyl-L-alanyl-gamma-D-glutamyl-meso-2,6-diaminopimeloyl-D-alanine(out) + n H(+)(out) = N-acetyl-beta-D-glucosaminyl-(1-&gt;4)-1,6-anhydro-N-acetyl-beta-D-muramoyl-L-alanyl-gamma-D-glutamyl-meso-2,6-diaminopimeloyl-D-alanine(in) + n H(+)(in). It catalyses the reaction L-alanyl-gamma-D-glutamyl-meso-2,6-diaminopimelate(out) + n H(+)(out) = L-alanyl-gamma-D-glutamyl-meso-2,6-diaminopimelate(in) + n H(+)(in). The enzyme catalyses N-acetyl-D-muramoyl-L-alanyl-D-isoglutamine(out) + n H(+)(out) = N-acetyl-D-muramoyl-L-alanyl-D-isoglutamine(in) + n H(+)(in). The catalysed reaction is 2',3'-cGAMP(out) + n H(+)(out) = 2',3'-cGAMP(in) + n H(+)(in). It carries out the reaction 3',3'-cGAMP(out) + n H(+)(out) = 3',3'-cGAMP(in) + n H(+)(in). Functionally, proton-coupled transporter that delivers pathogen-associated or danger-associated molecular patterns to cytosolic pattern recognition receptors as part of the innate immune response to microbes or tissue injury. Has selectivity toward muropeptides that contain the amino acid diaminopimelic acid (DAP-type peptidoglycan muropeptides) including Tri-DAP and tracheal toxin (TCT), common in Gram-negative bacteria and Gram-positive bacilli. In the context of immune recognition of skin microbiota, shuttles bacterial muropeptides across the endolysosomal membranes into the cytosol for recognition by NOD1, triggering MYD88-dependent secretion of IL1A and neutrophil recruitment in a pyroptosis-type inflammatory process. To a lesser extent and redundantly, transports muramyl dipeptides derived from most bacterial proteoglycans, eliciting NOD2 receptor activation and downstream inflammatory responses. Postulated to function as an importer of cyclic GMP-AMP dinucleotides (cGAMPs) in monocyte and macrophage cell lineages. Selectively imports cGAMPs derived from pathogenic bacteria such as 3'3'-cGAMP thus providing for differential immune recognition of pathogenic versus commensal bacteria. During tumorigenesis may transport extracellular tumor-derived 2'3'-cGAMP across the plasma membrane of M1-polarized macrophages to activate the anti-tumoral stimulator of interferon genes (STING) pathway. The transport mechanism, its electrogenicity and stoichiometry remain to be elucidated. The protein is Solute carrier family 46 member 2 of Canis lupus familiaris (Dog).